Reading from the N-terminus, the 1350-residue chain is Probable serine/threonine-protein kinase DDB_G0278845 (1350 aa).

Disordered regions lie at residues 66–109, 121–159, 179–249, 270–296, 337–396, 431–506, 525–596, and 612–701; these read RELN…NNIR, ENGLLESPTSPIRTSSTPTTPTSPPFITSPPFITSPKGL, LANN…LNSI, SSINGNTTTTTTNTYSYNDNDNVNEYS, NNYN…RDDL, GSTI…EKKK, NDSN…IPTP, and NNNS…NTNE. Residues 84-98 show a composition bias toward polar residues; it reads KYLTSSHSSVVIPQD. Composition is skewed to low complexity over residues 127-140 and 181-210; these read SPTSPIRTSSTPTT and NNNNNNNNSNNSNNNSNSSNSNISCSNNSN. Residues 211-222 show a composition bias toward polar residues; sequence KISRLINNSNTT. The segment covering 223-235 has biased composition (low complexity); that stretch reads DSNASIRSSNNNN. Positions 236–246 are enriched in acidic residues; it reads DDFDNNDDEDL. 2 stretches are compositionally biased toward low complexity: residues 270-293 and 337-391; these read SSINGNTTTTTTNTYSYNDNDNVN and NNYN…GYNN. Residues 431 to 443 are compositionally biased toward polar residues; sequence GSTIFTSTSSDIA. Acidic residues predominate over residues 454 to 482; sequence NENENENENENENENENDNDSDSENENEN. Composition is skewed to low complexity over residues 483–495 and 525–551; these read DNSIGNKSNKSNS and NDSNNNNNNNNSGNNNSFISNGSPFSP. The segment covering 565–592 has biased composition (polar residues); the sequence is PKPTLQRQRSNSKNVLYSPNASPSNSCK. Low complexity-rich tracts occupy residues 612–637, 645–679, and 690–701; these read NNNSNNIENQNNNNNNIDNNIDNNID, NNNNNNNNNNNNNNNNNNNNNNNNNNNNNNNNNNN, and KKTPNNKINTNE. The region spanning 756–1082 is the Protein kinase domain; the sequence is FTLIEKIGEG…VENIKNHIFF (327 aa). Residues 762 to 770 and Lys785 each bind ATP; that span reads IGEGGFGQV. The Proton acceptor role is filled by Asp880. One can recognise an AGC-kinase C-terminal domain in the interval 1083–1203; it reads NGVPWGKLHD…PRADDQPLLW (121 aa). Disordered stretches follow at residues 1129 to 1159, 1190 to 1219, 1232 to 1285, and 1300 to 1350; these read SLLPPPLPPPPQTPTQPQQPSLPPQTPNDKM, GFTYPRADDQPLLWNNNNNNNNNNNNNNNN, NNNN…NKTV, and NCNN…KQQQ. Positions 1131 to 1142 are enriched in pro residues; that stretch reads LPPPLPPPPQTP. Low complexity-rich tracts occupy residues 1204–1219, 1232–1283, and 1300–1313; these read NNNNNNNNNNNNNNNN, NNNN…SNNK, and NCNNNNNNDENNIN. Composition is skewed to polar residues over residues 1314–1330 and 1338–1350; these read TGNLTPPNSSPFNSGEN and PTSPYGSYSKQQQ.

It belongs to the protein kinase superfamily. AGC Ser/Thr protein kinase family.

It carries out the reaction L-seryl-[protein] + ATP = O-phospho-L-seryl-[protein] + ADP + H(+). The catalysed reaction is L-threonyl-[protein] + ATP = O-phospho-L-threonyl-[protein] + ADP + H(+). The sequence is that of Probable serine/threonine-protein kinase DDB_G0278845 from Dictyostelium discoideum (Social amoeba).